The chain runs to 148 residues: Lysozyme C (148 aa).

The first 18 residues, Met1–Gly18, serve as a signal peptide directing secretion. One can recognise a C-type lysozyme domain in the interval Lys19–Val148. 4 cysteine pairs are disulfide-bonded: Cys24/Cys146, Cys48/Cys134, Cys83/Cys99, and Cys95/Cys113. Catalysis depends on residues Glu53 and Asp71.

This sequence belongs to the glycosyl hydrolase 22 family. As to quaternary structure, monomer.

Its subcellular location is the secreted. The catalysed reaction is Hydrolysis of (1-&gt;4)-beta-linkages between N-acetylmuramic acid and N-acetyl-D-glucosamine residues in a peptidoglycan and between N-acetyl-D-glucosamine residues in chitodextrins.. Its function is as follows. Lysozymes have primarily a bacteriolytic function; those in tissues and body fluids are associated with the monocyte-macrophage system and enhance the activity of immunoagents. The protein is Lysozyme C (LYZ) of Nasalis larvatus (Proboscis monkey).